Reading from the N-terminus, the 588-residue chain is Tetratricopeptide repeat protein 39B (588 aa).

3 TPR repeats span residues 294–327 (SIIL…QQEW), 485–518 (CLVQ…EKRV), and 526–559 (PFTF…YKDY).

Belongs to the TTC39 family.

Functionally, may be involved in lipid metabolism. The protein is Tetratricopeptide repeat protein 39B (ttc39b) of Xenopus tropicalis (Western clawed frog).